The following is a 455-amino-acid chain: Growth/differentiation factor 9 (455 aa).

The signal sequence occupies residues 1–24 (MALPNKFLLWFYCFAWLCFPVSLG). The propeptide occupies 25–320 (SQASGGDAQI…GRSSHHRHRR (296 aa)). Residues Asn106, Asn163, Asn236, Asn255, and Asn269 are each glycosylated (N-linked (GlcNAc...) asparagine). The segment at 305–328 (EDAAEDGRSSHHRHRRGQETVSSE) is disordered. N-linked (GlcNAc...) asparagine glycosylation is present at Asn339. Cystine bridges form between Cys354/Cys420, Cys383/Cys452, and Cys387/Cys454.

Belongs to the TGF-beta family. In terms of assembly, homodimer or heterodimer (Potential). But, in contrast to other members of this family, cannot be disulfide-linked. Phosphorylated; phosphorylation is critical for GDF9 function.

Its subcellular location is the secreted. Its function is as follows. Required for ovarian folliculogenesis. The chain is Growth/differentiation factor 9 (GDF9) from Papio anubis (Olive baboon).